We begin with the raw amino-acid sequence, 239 residues long: MEIFPAIDLKEGRCVRLYQGEFSKETVMNEDPVAQAIIFEKLGAEILHIVDLDGAIAGESLNFLVIEKICKAVRIPVQVGGGIRSLKAVEKLLSVGVEKVILGTAALYDKSFLEEAVHLYKEKIIVGIDAKNGFVATRGWLDLSEISYISLAKQMESLGVQTIVFTDISKDGTLAGPNFEQLTLLQKSVGIRLIASGGVASIQDVKKLNDMNIYGVIIGKALYEKKIDLEEVLQVTKLC.

D8 acts as the Proton acceptor in catalysis. Residue D129 is the Proton donor of the active site.

It belongs to the HisA/HisF family.

The protein resides in the cytoplasm. The enzyme catalyses 1-(5-phospho-beta-D-ribosyl)-5-[(5-phospho-beta-D-ribosylamino)methylideneamino]imidazole-4-carboxamide = 5-[(5-phospho-1-deoxy-D-ribulos-1-ylimino)methylamino]-1-(5-phospho-beta-D-ribosyl)imidazole-4-carboxamide. It functions in the pathway amino-acid biosynthesis; L-histidine biosynthesis; L-histidine from 5-phospho-alpha-D-ribose 1-diphosphate: step 4/9. This is 1-(5-phosphoribosyl)-5-[(5-phosphoribosylamino)methylideneamino] imidazole-4-carboxamide isomerase from Bacillus cereus (strain G9842).